A 137-amino-acid chain; its full sequence is ATP synthase epsilon chain (137 aa).

This sequence belongs to the ATPase epsilon chain family. As to quaternary structure, F-type ATPases have 2 components, CF(1) - the catalytic core - and CF(0) - the membrane proton channel. CF(1) has five subunits: alpha(3), beta(3), gamma(1), delta(1), epsilon(1). CF(0) has three main subunits: a, b and c.

Its subcellular location is the cell inner membrane. In terms of biological role, produces ATP from ADP in the presence of a proton gradient across the membrane. This Ruegeria sp. (strain TM1040) (Silicibacter sp.) protein is ATP synthase epsilon chain.